The primary structure comprises 500 residues: FAD-linked oxidoreductase chyH (500 aa).

An N-terminal signal peptide occupies residues 1–20 (MRLQAVTAVAAWAVASACQS). An FAD-binding PCMH-type domain is found at 65-235 (LEVPTVNIVI…TSVTSKTYDI (171 aa)). N-linked (GlcNAc...) asparagine glycosylation is found at asparagine 199, asparagine 266, asparagine 275, and asparagine 383.

Belongs to the oxygen-dependent FAD-linked oxidoreductase family. The cofactor is FAD.

Its pathway is pigment biosynthesis. FAD-linked oxidoreductase; part of the gene cluster that mediates the biosynthesis of the yellow pigment chrysogine. the NRPS chyA mediates the condensation of anthranilic acid and alanine into the intermediate 2-(2-aminopropanamido)benzoic acid. The remainder of the pathway is highly branched yielding at least 13 chrysogine-related compounds. The malonyl transferase chyE converts 2-(2-aminopropanamido)benzoic acid and 2-(2-aminopropanamido)benzamidine into 2-(2-(2-carboxyacetamido)propanamido)benzoic acid and 3-((1-((2-carbamoylphenyl)amino)-1-oxopropan-2-yl)amino)-3-oxopropanoic acid, respectively. ChyD is an amidase, being responsible for the amidation of the carboxylic acid moiety of 2-(2-aminopropanamido)benzoic acid, 2-(2-(2-carboxyacetamido)propanamido)benzoic acid and 2-(2-((4-amino-1-carboxy-4-oxobutyl)amino)propanamido)benzoic acid. ChyC is involved in the same reactions as ChyD, but plays a more minor role in the amidation reactions compared to chyD. The oxidoreductases chyH and chyM are involved in oxidation reactions that form N-pyruvoylanthranilamide from 2-(2-aminopropanamido)benzamidine and (1-((2-carbamoylphenyl)amino)-1-oxopropan-2-yl)glutamine, respectively. N-pyruvoylanthranilamide is further converted via two further branches in the pathway, yielding chrysogine and additional chrysogine-related coumpounds. Chrysogine is likely formed by a spontaneous ring closure from N-pyruvoylanthranilamide. This chain is FAD-linked oxidoreductase chyH, found in Penicillium rubens (strain ATCC 28089 / DSM 1075 / NRRL 1951 / Wisconsin 54-1255) (Penicillium chrysogenum).